The chain runs to 956 residues: Calsyntenin-3 (956 aa).

Positions 1–19 (MTLLLLPLLLASLLASCSC) are cleaved as a signal peptide. The Cytoplasmic segment spans residues 1-30 (MTLLLLPLLLASLLASCSCNKANKHKPWIE). Topologically, residues 20–847 (NKANKHKPWI…SHRNSMIPSA (828 aa)) are extracellular. Cadherin domains lie at 29–145 (IEAE…APVF) and 146–246 (VERL…KPSW). Positions 31–51 (AEYQGIVMENDNTVLLNPPLF) form an intramembrane region, helical. The Cytoplasmic portion of the chain corresponds to 52–71 (ALDKDAPLRYAGEICGFRLH). The helical intramembrane region spans 72 to 94 (GSGVPFEAVILDKATGEGLIRAK). Topologically, residues 95-151 (EPVDCEAQKEHTFTIQAYDCGEGPDGANTKKSHKATVHVRVNDVNEFAPVFVERLYR) are cytoplasmic. Positions 152–172 (AAVTEGKLYDRILRVEAIDGD) form an intramembrane region, helical. At 173–255 (CSPQYSQICY…WQGWNKRIEY (83 aa)) the chain is on the cytoplasmic side. A helical membrane pass occupies residues 256 to 276 (APGAGSLALFPGIRLETCDEP). Residues 277–364 (LWNIQATIEL…PLGGPSGLGS (88 aa)) are Lumenal-facing. N-linked (GlcNAc...) asparagine glycans are attached at residues Asn-299, Asn-327, Asn-347, Asn-507, and Asn-740. The helical transmembrane segment at 848-868 (ATLIIVVCVGFLVLMVVLGLV) threads the bilayer. Residues 869–956 (RIHSLHRRVS…RIIETPPHRY (88 aa)) lie on the Cytoplasmic side of the membrane. Residues 916-956 (QSCVTGAVGGQQEDEDSSDSEVADSPSSDERRIIETPPHRY) are disordered. Acidic residues predominate over residues 927–937 (QEDEDSSDSEV). Over residues 943-956 (SDERRIIETPPHRY) the composition is skewed to basic and acidic residues.

The protein belongs to the calsyntenin family. In terms of assembly, interacts (via cadherin domains) with both alpha and beta isoforms of neurexins (NRXN1, NRXN2 and NRXN3). Directly interacts with APBA2. Forms a tripartite complex with APBA2 and APP. Interacts with low affinity with KLC1. Interacts with SLC23A2/SVCT2. As to quaternary structure, interacts with CIDEA; inhibiting the lipid transferase activity of CIDEA. Interacts with CIDEC; inhibiting the lipid transferase activity of CIDEC. Proteolytically processed under normal cellular conditions. A primary zeta-cleavage generates a large extracellular (soluble) N-terminal domain (sAlc) and a short C-terminal transmembrane fragment (CTF1). A secondary cleavage catalyzed by gamma-secretase within the transmembrane domain releases the beta-Alc-beta chain in the extracellular milieu and produces an intracellular fragment (AlcICD). This processing is strongly suppressed in the tripartite complex formed with APBA2 and APP, which seems to prevent the association with gamma-secretase. In terms of processing, ubiquitinated: endoplasmic reticulum-localized protein is ubiquitinated and degraded by the endoplasmic reticulum-associated degradation (ERAD) pathway. As to expression, according to PubMed:12498782, expressed predominantly in the brain and in kidney. Low levels in heart, skeletal muscle, liver, placenta, pancreas and lung. According to PubMed:12972431, predominant expression in brain, and only marginal in kidney. In brain, present throughout all cortical layers, highest levels in GABAergic neurons (based on morphology and distribution pattern). Expression is restricted to adipose tissue, with high expression in multilocular thermogenic adipocytes (brown adipose tissue).

Its subcellular location is the postsynaptic cell membrane. The protein resides in the endoplasmic reticulum membrane. The protein localises to the golgi apparatus membrane. It is found in the cell projection. It localises to the dendrite. Its subcellular location is the lipid droplet. Its function is as follows. Postsynaptic adhesion molecule that binds to presynaptic neurexins to mediate both excitatory and inhibitory synapse formation. Promotes synapse development by acting as a cell adhesion molecule at the postsynaptic membrane, which associates with both neurexin-alpha and neurexin-beta proteins at the presynaptic membrane. Regulates the balance between excitatory and inhibitory synapses by inhibiting formation of excitatory parallel-fiber synapses and promoting formation of inhibitory synapses in the same neuron. May also be involved in ascorbate (vitamin C) uptake via its interaction with SLC23A2/SVCT2. Complex formation with APBA2 and APP, stabilizes APP metabolism and enhances APBA2-mediated suppression of beta-APP40 secretion, due to the retardation of intracellular APP maturation. Functionally, adipose-specific isoform that plays a key role in adaptive thermogenesis. Facilitates the efficient use of stored triglyceride by promoting multilocular morphology of thermogenic adipocytes: acts by inhibiting the activity of CIDEA and CIDEC on lipid droplets, thereby preventing lipid droplet fusion and facilitating lipid utilization. May also participate in adaptive thermogenesis by promoting sympathetic innervation of thermogenic adipose tissue: acts by driving secretion of neurotrophic factor S100B from brown adipocytes, stimulating neurite outgrowth from sympathetic neurons. The chain is Calsyntenin-3 from Homo sapiens (Human).